We begin with the raw amino-acid sequence, 492 residues long: Protein PAIR1 (492 aa).

Positions 166-186 form a coiled coil; it reads VDSVQSDVMQLNRAMKEASLD. Residues 479–483 carry the Nuclear localization signal motif; the sequence is KRRRR.

Interacts with CRC1. In terms of tissue distribution, expressed in reproductive organs, but not in vegetative organs.

Its subcellular location is the nucleus. Involved in spore formation. Plays an essential role in the establishment of homologous chromosome pairing in early meiosis. The sequence is that of Protein PAIR1 (PAIR1) from Oryza sativa subsp. japonica (Rice).